The sequence spans 403 residues: Phosphoglycerate kinase (403 aa).

Residues 21–23 (DFN), arginine 36, 59–62 (HLGR), arginine 119, and arginine 159 contribute to the substrate site. Residues lysine 214, glycine 301, glutamate 332, and 359-362 (GGDS) contribute to the ATP site.

Belongs to the phosphoglycerate kinase family. In terms of assembly, monomer.

It is found in the cytoplasm. The catalysed reaction is (2R)-3-phosphoglycerate + ATP = (2R)-3-phospho-glyceroyl phosphate + ADP. Its pathway is carbohydrate degradation; glycolysis; pyruvate from D-glyceraldehyde 3-phosphate: step 2/5. This Lactobacillus acidophilus (strain ATCC 700396 / NCK56 / N2 / NCFM) protein is Phosphoglycerate kinase.